Here is a 531-residue protein sequence, read N- to C-terminus: Lysine--tRNA ligase, mitochondrial (531 aa).

A mitochondrion-targeting transit peptide spans 1–18 (MISRGLLSKGILSIIKRK).

Belongs to the class-II aminoacyl-tRNA synthetase family.

The protein resides in the mitochondrion. It catalyses the reaction tRNA(Lys) + L-lysine + ATP = L-lysyl-tRNA(Lys) + AMP + diphosphate. This is Lysine--tRNA ligase, mitochondrial (msk1) from Schizosaccharomyces pombe (strain 972 / ATCC 24843) (Fission yeast).